The chain runs to 82 residues: Metallothionein (82 aa).

Cd(2+) is bound by residues Cys-6, Cys-8, Cys-11, Cys-13, Cys-29, Cys-33, His-37, Cys-43, Cys-48, and Cys-50. The Zn(2+) site is built by Cys-6, Cys-8, and Cys-11. Residues Cys-29, Cys-33, His-37, Cys-43, Cys-48, and Cys-50 each coordinate Zn(2+). The segment at 61–82 (ITNNQLDEALEETFPASDPISP) is disordered.

It belongs to the metallothionein superfamily.

Metallothioneins are small proteins that have a high content of cysteine residues which allow them to bind heavy metal ions through clusters of thiolate bonds. Preferentially, binds four Cd(2+) ions. Also binds three Zn(2+) ions but with less affinity. Required for long-term viability. May play a role in the storage or sequestration of metals when present in excess. The sequence is that of Metallothionein from Pseudomonas fluorescens (strain Q2-87).